The primary structure comprises 37 residues: Hemextin B (37 aa).

As to quaternary structure, heterotetramer composed of 2 hemextin A and 2 hemextin B chains; non-covalently linked. Does not exist as a complex in the crude venom. Post-translationally, may contain several disulfide bonds. Expressed by the venom gland.

It is found in the secreted. In terms of biological role, hemextin B (monomer): does not show anticoagulant activity. Seems only to synergitically enhance hemextin A activity. Functionally, hemextin AB complex: specifically inhibits the activation of FX (F10) by the TF-FVIIa complex (extrinsic tenase complex (ETC)) (IC(50)= 100 nM, Ki=50 nM) by non-competitively inhibiting the enzymatic activity of FVIIa. The polypeptide is Hemextin B (Hemachatus haemachatus (Rinkhals)).